The primary structure comprises 95 residues: Protein TRACHEARY ELEMENT DIFFERENTIATION-RELATED 6 (95 aa).

Residues 1–3 lie on the Extracellular side of the membrane; sequence MAT. The helical transmembrane segment at 4-24 threads the bilayer; it reads IFIVFVSFGCVFVLGIAAFVL. At 25 to 95 the chain is on the cytoplasmic side; that stretch reads CCLIKKWKCS…KLGTASTSKA (71 aa).

Interacts with the secondary cell wall (SCW)-related cellulose synthase complex. As to expression, accumulates in cells differentiating into tracheary element (TE) which undergo secondary cell wall (SCW) formation.

It localises to the cell membrane. Its subcellular location is the secreted. The protein resides in the cell wall. Its function is as follows. Involved in the secondary cell wall (SCW) formation of vessel elements (e.g. protoxylem and metaxylem), thus promoting tracheary element (TE) differentiation. This Zinnia elegans (Garden zinnia) protein is Protein TRACHEARY ELEMENT DIFFERENTIATION-RELATED 6.